Consider the following 292-residue polypeptide: NAD kinase (292 aa).

Asp73 serves as the catalytic Proton acceptor. Residues Asp73–Gly74, Asn147–Glu148, His158, Arg175, Asp177, Thr188–Ser193, and Gln247 each bind NAD(+).

The protein belongs to the NAD kinase family. It depends on a divalent metal cation as a cofactor.

It localises to the cytoplasm. The enzyme catalyses NAD(+) + ATP = ADP + NADP(+) + H(+). In terms of biological role, involved in the regulation of the intracellular balance of NAD and NADP, and is a key enzyme in the biosynthesis of NADP. Catalyzes specifically the phosphorylation on 2'-hydroxyl of the adenosine moiety of NAD to yield NADP. The chain is NAD kinase from Salmonella agona (strain SL483).